We begin with the raw amino-acid sequence, 252 residues long: MTTKLSVNLNKVALVRNTRHLGIPSVTRAATLCLQAGANGITVHPRPDERHIRTDDVRDLALLMQAWPDREFNIEGNPLHNLMDVVHGLVEKKLPVHQVTFVPDSEGQFTSDHGWNFPGDASRLRPLIAQAHAWGLRVSLFMDADPAAMAGAQAVGADRVELYTEPYAAAWGTAQQTPQLARFAETARAALKLGLGVNAGHDLNRDNLSAFIQAVPGVAEVSIGHALIADALELGYSATVQAYLRCIAQGRS.

3-amino-2-oxopropyl phosphate is bound by residues asparagine 8 and arginine 19. The active-site Proton acceptor is the histidine 44. Residues arginine 46 and histidine 51 each coordinate 1-deoxy-D-xylulose 5-phosphate. Catalysis depends on glutamate 75, which acts as the Proton acceptor. Threonine 110 contributes to the 1-deoxy-D-xylulose 5-phosphate binding site. Catalysis depends on histidine 201, which acts as the Proton donor. 3-amino-2-oxopropyl phosphate is bound by residues aspartate 202 and 224-225; that span reads GH.

Belongs to the PNP synthase family. Homooctamer; tetramer of dimers.

Its subcellular location is the cytoplasm. It carries out the reaction 3-amino-2-oxopropyl phosphate + 1-deoxy-D-xylulose 5-phosphate = pyridoxine 5'-phosphate + phosphate + 2 H2O + H(+). Its pathway is cofactor biosynthesis; pyridoxine 5'-phosphate biosynthesis; pyridoxine 5'-phosphate from D-erythrose 4-phosphate: step 5/5. In terms of biological role, catalyzes the complicated ring closure reaction between the two acyclic compounds 1-deoxy-D-xylulose-5-phosphate (DXP) and 3-amino-2-oxopropyl phosphate (1-amino-acetone-3-phosphate or AAP) to form pyridoxine 5'-phosphate (PNP) and inorganic phosphate. The sequence is that of Pyridoxine 5'-phosphate synthase from Albidiferax ferrireducens (strain ATCC BAA-621 / DSM 15236 / T118) (Rhodoferax ferrireducens).